We begin with the raw amino-acid sequence, 614 residues long: DNA ligase (614 aa).

Residues 29–33 (DQDYD) and 73–74 (SI) contribute to the NAD(+) site. Lysine 111 functions as the N6-AMP-lysine intermediate in the catalytic mechanism. NAD(+) contacts are provided by arginine 127, glutamate 158, and lysine 270. Cysteine 358, cysteine 361, cysteine 374, and cysteine 380 together coordinate Zn(2+). Residues 538–614 (TLTHELFDKK…MTETDYLSKI (77 aa)) enclose the BRCT domain.

Belongs to the NAD-dependent DNA ligase family. LigA subfamily. It depends on Mg(2+) as a cofactor. Mn(2+) serves as cofactor.

The enzyme catalyses NAD(+) + (deoxyribonucleotide)n-3'-hydroxyl + 5'-phospho-(deoxyribonucleotide)m = (deoxyribonucleotide)n+m + AMP + beta-nicotinamide D-nucleotide.. In terms of biological role, DNA ligase that catalyzes the formation of phosphodiester linkages between 5'-phosphoryl and 3'-hydroxyl groups in double-stranded DNA using NAD as a coenzyme and as the energy source for the reaction. It is essential for DNA replication and repair of damaged DNA. The protein is DNA ligase of Ruthia magnifica subsp. Calyptogena magnifica.